The chain runs to 97 residues: Aspartyl/glutamyl-tRNA(Asn/Gln) amidotransferase subunit C (97 aa).

It belongs to the GatC family. In terms of assembly, heterotrimer of A, B and C subunits.

It catalyses the reaction L-glutamyl-tRNA(Gln) + L-glutamine + ATP + H2O = L-glutaminyl-tRNA(Gln) + L-glutamate + ADP + phosphate + H(+). It carries out the reaction L-aspartyl-tRNA(Asn) + L-glutamine + ATP + H2O = L-asparaginyl-tRNA(Asn) + L-glutamate + ADP + phosphate + 2 H(+). Its function is as follows. Allows the formation of correctly charged Asn-tRNA(Asn) or Gln-tRNA(Gln) through the transamidation of misacylated Asp-tRNA(Asn) or Glu-tRNA(Gln) in organisms which lack either or both of asparaginyl-tRNA or glutaminyl-tRNA synthetases. The reaction takes place in the presence of glutamine and ATP through an activated phospho-Asp-tRNA(Asn) or phospho-Glu-tRNA(Gln). This chain is Aspartyl/glutamyl-tRNA(Asn/Gln) amidotransferase subunit C, found in Picosynechococcus sp. (strain ATCC 27264 / PCC 7002 / PR-6) (Agmenellum quadruplicatum).